A 453-amino-acid chain; its full sequence is Cysteine--tRNA ligase (453 aa).

Residue Cys30 participates in Zn(2+) binding. Positions 32-42 (PTVYDRAHLGN) match the 'HIGH' region motif. Zn(2+) is bound by residues Cys212, His237, and Glu241. The 'KMSKS' region motif lies at 268–272 (KMSKS). Residue Lys271 coordinates ATP.

It belongs to the class-I aminoacyl-tRNA synthetase family. In terms of assembly, monomer. Zn(2+) serves as cofactor.

Its subcellular location is the cytoplasm. It catalyses the reaction tRNA(Cys) + L-cysteine + ATP = L-cysteinyl-tRNA(Cys) + AMP + diphosphate. In Jannaschia sp. (strain CCS1), this protein is Cysteine--tRNA ligase.